The sequence spans 1098 residues: Sister-chromatid cohesion protein 3 (1098 aa).

Residues 1-68 are disordered; that stretch reads MEDSPQGLKR…RSRTHPPQQN (68 aa). The stretch at 245 to 265 forms a coiled coil; that stretch reads RVDSLNKRLSVTHEQITTLED. An SCD domain is found at 275–360; sequence FVHRYRDIDN…QRFSNRMIEM (86 aa). 3 coiled-coil regions span residues 632-653, 888-908, and 1009-1032; these read KLKDLEDELLDKITSAIREVKD, LESLKRAYHRYSSELSSGREE, and LETLEEKCLKNEDLQDDKEAANVR. A disordered region spans residues 1027 to 1077; the sequence is EAANVRRRGRPRKRPETERKRLFDEQSGSDEDESISGGSDREDKLDEDAPL. Positions 1040 to 1050 are enriched in basic and acidic residues; the sequence is RPETERKRLFD.

This sequence belongs to the SCC3 family. In terms of assembly, part of the cohesin complex. Interacts with DEK3. Expressed in roots, mature leaves, buds and seedlings.

It is found in the nucleus. The protein resides in the chromosome. Functionally, essential component of cohesin complex, a complex required for the cohesion of sister chromatids after DNA replication. The cohesin complex apparently forms a large proteinaceous ring within which sister chromatids can be trapped. At anaphase, the complex is cleaved and dissociates from chromatin, allowing sister chromatids to segregate. The cohesin complex may also play a role in spindle pole assembly during mitosis. Required for centromere cohesion maintenance at anaphase I and for the monopolar orientation of the kinetochores during both male and female meiosis. Also involved in mitosis. The polypeptide is Sister-chromatid cohesion protein 3 (Arabidopsis thaliana (Mouse-ear cress)).